A 219-amino-acid polypeptide reads, in one-letter code: Ribose-5-phosphate isomerase A (219 aa).

Residues 28–31 (SGST), 81–84 (DGAD), and 94–97 (KGGG) contribute to the substrate site. Glutamate 103 functions as the Proton acceptor in the catalytic mechanism. Lysine 121 contacts substrate.

This sequence belongs to the ribose 5-phosphate isomerase family. In terms of assembly, homodimer.

The enzyme catalyses aldehydo-D-ribose 5-phosphate = D-ribulose 5-phosphate. The protein operates within carbohydrate degradation; pentose phosphate pathway; D-ribose 5-phosphate from D-ribulose 5-phosphate (non-oxidative stage): step 1/1. Catalyzes the reversible conversion of ribose-5-phosphate to ribulose 5-phosphate. This is Ribose-5-phosphate isomerase A from Pasteurella multocida (strain Pm70).